A 163-amino-acid chain; its full sequence is Bursicon (163 aa).

An N-terminal signal peptide occupies residues 1–23; the sequence is MKSTFLVVLELAFFLLPGRVLYA. Intrachain disulfides connect C39/C88, C53/C102, C63/C123, C67/C125, and C85/C128. Residues 39 to 129 form the CTCK domain; that stretch reads CQVTPVIHVL…PLECMCRPCT (91 aa).

In terms of assembly, heterodimer of burs and pburs.

The protein localises to the secreted. Its function is as follows. Final heterodimeric neurohormone released at the end of the molting cycle, involved in the sclerotization (tanning) of the insect cuticle, melanization and wing spreading. The chain is Bursicon (burs124) from Anopheles gambiae (African malaria mosquito).